We begin with the raw amino-acid sequence, 259 residues long: Phosphatidylglycerol--prolipoprotein diacylglyceryl transferase (259 aa).

The next 4 membrane-spanning stretches (helical) occupy residues 16–36 (LAIS…WFYA), 55–75 (FITY…VLLY), 92–112 (EGGM…YLFC), and 117–137 (INFL…LFLG). R138 contributes to the a 1,2-diacyl-sn-glycero-3-phospho-(1'-sn-glycerol) binding site. 3 helical membrane passes run 172–192 (QLYE…YATF), 201–221 (GLNS…IEIF), and 228–248 (IGFI…MLLL).

It belongs to the Lgt family.

The protein localises to the cell inner membrane. It catalyses the reaction L-cysteinyl-[prolipoprotein] + a 1,2-diacyl-sn-glycero-3-phospho-(1'-sn-glycerol) = an S-1,2-diacyl-sn-glyceryl-L-cysteinyl-[prolipoprotein] + sn-glycerol 1-phosphate + H(+). It participates in protein modification; lipoprotein biosynthesis (diacylglyceryl transfer). Its function is as follows. Catalyzes the transfer of the diacylglyceryl group from phosphatidylglycerol to the sulfhydryl group of the N-terminal cysteine of a prolipoprotein, the first step in the formation of mature lipoproteins. In Rickettsia rickettsii (strain Iowa), this protein is Phosphatidylglycerol--prolipoprotein diacylglyceryl transferase.